We begin with the raw amino-acid sequence, 197 residues long: Chitin synthase 3 (197 aa).

It belongs to the chitin synthase family. Class III subfamily.

It localises to the cell membrane. It catalyses the reaction [(1-&gt;4)-N-acetyl-beta-D-glucosaminyl](n) + UDP-N-acetyl-alpha-D-glucosamine = [(1-&gt;4)-N-acetyl-beta-D-glucosaminyl](n+1) + UDP + H(+). Functionally, polymerizes chitin, a structural polymer of the cell wall and septum, by transferring the sugar moiety of UDP-GlcNAc to the non-reducing end of the growing chitin polymer. The sequence is that of Chitin synthase 3 (CHS3) from Exophiala jeanselmei (Dematiaceous fungus).